Consider the following 82-residue polypeptide: MAAGSTGERPFFEIVTSIRYWVIHAVTLPSIFLAGYLFVSTGLAYDTFGTPRPDAYFQASESKAPVVSQRYEAKSQLDLRLQ.

Residues 22-36 (VIHAVTLPSIFLAGY) traverse the membrane as a helical segment. Residue His24 coordinates heme.

This sequence belongs to the PsbE/PsbF family. Heterodimer of an alpha subunit and a beta subunit. PSII is composed of 1 copy each of membrane proteins PsbA, PsbB, PsbC, PsbD, PsbE, PsbF, PsbH, PsbI, PsbJ, PsbK, PsbL, PsbM, PsbT, PsbX, PsbY, Psb30/Ycf12, peripheral proteins PsbO, CyanoQ (PsbQ), PsbU, PsbV and a large number of cofactors. It forms dimeric complexes. Heme b serves as cofactor.

It is found in the cellular thylakoid membrane. Its function is as follows. This b-type cytochrome is tightly associated with the reaction center of photosystem II (PSII). PSII is a light-driven water:plastoquinone oxidoreductase that uses light energy to abstract electrons from H(2)O, generating O(2) and a proton gradient subsequently used for ATP formation. It consists of a core antenna complex that captures photons, and an electron transfer chain that converts photonic excitation into a charge separation. The polypeptide is Cytochrome b559 subunit alpha (Prochlorococcus marinus (strain MIT 9303)).